A 371-amino-acid polypeptide reads, in one-letter code: 4-hydroxy-3-methylbut-2-en-1-yl diphosphate synthase (flavodoxin) (371 aa).

[4Fe-4S] cluster is bound by residues Cys268, Cys271, Cys303, and Glu310.

This sequence belongs to the IspG family. The cofactor is [4Fe-4S] cluster.

The enzyme catalyses (2E)-4-hydroxy-3-methylbut-2-enyl diphosphate + oxidized [flavodoxin] + H2O + 2 H(+) = 2-C-methyl-D-erythritol 2,4-cyclic diphosphate + reduced [flavodoxin]. It participates in isoprenoid biosynthesis; isopentenyl diphosphate biosynthesis via DXP pathway; isopentenyl diphosphate from 1-deoxy-D-xylulose 5-phosphate: step 5/6. In terms of biological role, converts 2C-methyl-D-erythritol 2,4-cyclodiphosphate (ME-2,4cPP) into 1-hydroxy-2-methyl-2-(E)-butenyl 4-diphosphate. The chain is 4-hydroxy-3-methylbut-2-en-1-yl diphosphate synthase (flavodoxin) from Lysinibacillus sphaericus (strain C3-41).